The following is a 331-amino-acid chain: MISFSSFYQQIADSNLQHWLETLPSILGKWQRDHKHGNLPKWEKVLNKLHYPAPDQVDFIDSVTVGSGEQLSPGEKEKLENLLRLFMPWRKGPFHIHGIHIDTEWRSDWKWDRVKQHISPLKNRTVLDVGCGSGYHMWRMLGSGAKRVVGIDPSPLFLCQFEAVKRLAGTHHPVHLLPLGIEELPPLDAFDTVFSMGVLYHRRSPIDHLLQLRDQLRTGGELVLETLVIDGDENAVLVPQDRYGKMNNVWFIPSVAALMLWLKKCDFTDIRCVDTDVTALAEQRRTDWMPNESLVEYLDPNDITKTVEGYPAPKRATIIAVKNQPNQDLIS.

Residues Lys-91, Trp-105, Lys-110, Gly-130, 152–154, 181–182, Met-196, Tyr-200, and Arg-315 contribute to the carboxy-S-adenosyl-L-methionine site; these read DPS and IE.

The protein belongs to the class I-like SAM-binding methyltransferase superfamily. CmoB family. In terms of assembly, homotetramer.

It catalyses the reaction carboxy-S-adenosyl-L-methionine + 5-hydroxyuridine(34) in tRNA = 5-carboxymethoxyuridine(34) in tRNA + S-adenosyl-L-homocysteine + H(+). In terms of biological role, catalyzes carboxymethyl transfer from carboxy-S-adenosyl-L-methionine (Cx-SAM) to 5-hydroxyuridine (ho5U) to form 5-carboxymethoxyuridine (cmo5U) at position 34 in tRNAs. This Shewanella baltica (strain OS155 / ATCC BAA-1091) protein is tRNA U34 carboxymethyltransferase.